Here is an 851-residue protein sequence, read N- to C-terminus: Glycogen phosphorylase, liver form (851 aa).

An N-acetylalanine modification is found at A2. S15 is subject to Phosphoserine; by PHK; in form phosphorylase a. Residues 43 to 45 (DRN), Y76, and R310 each bind AMP. K364 carries the N6-succinyllysine modification. An N6-acetyllysine modification is found at K470. Residues S524, S561, and S639 each carry the phosphoserine modification. The residue at position 681 (K681) is an N6-(pyridoxal phosphate)lysine. The residue at position 796 (K796) is an N6-acetyllysine.

It belongs to the glycogen phosphorylase family. Homodimer; enzymatically active. Interacts with PPP1R3B; recruits the phosphatase PP1 which dephosphorylates and inactivates PYGL/glycogen phosphorylase. The cofactor is pyridoxal 5'-phosphate. In terms of processing, acetylation, which is up-regulated by glucose and insulin and down-regulated by glucagon, inhibits the glycogen phosphorylase activity by promoting PPP1R3B-mediated recruitment of phosphatase PP1 and Ser-15 dephosphorylation. Post-translationally, phosphorylation at Ser-15 converts inactive phosphorylase b into active phosphorylase a. Dephosphorylation of Ser-15 by phosphatase PP1 inactivates the enzyme.

Its subcellular location is the cytoplasm. It localises to the cytosol. The enzyme catalyses [(1-&gt;4)-alpha-D-glucosyl](n) + phosphate = [(1-&gt;4)-alpha-D-glucosyl](n-1) + alpha-D-glucose 1-phosphate. Allosterically regulated through the non-covalent binding of metabolites, being activated by AMP and inhibited by ATP, ADP, and glucose-6-phosphate. The activity is also controlled by post-translational modifications including phosphorylation and acetylation. In terms of biological role, allosteric enzyme that catalyzes the rate-limiting step in glycogen catabolism, the phosphorolytic cleavage of glycogen to produce glucose-1-phosphate, and plays a central role in maintaining cellular and organismal glucose homeostasis. The polypeptide is Glycogen phosphorylase, liver form (Ovis aries (Sheep)).